The sequence spans 128 residues: DNA-directed RNA polymerase subunit omega (128 aa).

Belongs to the RNA polymerase subunit omega family. In terms of assembly, the RNAP catalytic core consists of 2 alpha, 1 beta, 1 beta' and 1 omega subunit. When a sigma factor is associated with the core the holoenzyme is formed, which can initiate transcription.

It catalyses the reaction RNA(n) + a ribonucleoside 5'-triphosphate = RNA(n+1) + diphosphate. Promotes RNA polymerase assembly. Latches the N- and C-terminal regions of the beta' subunit thereby facilitating its interaction with the beta and alpha subunits. The sequence is that of DNA-directed RNA polymerase subunit omega from Azorhizobium caulinodans (strain ATCC 43989 / DSM 5975 / JCM 20966 / LMG 6465 / NBRC 14845 / NCIMB 13405 / ORS 571).